The sequence spans 777 residues: Acyl-homoserine lactone acylase PvdQ (777 aa).

Residues 1-25 form the signal peptide; that stretch reads MIISRQLPSFCLAALFLSFSGGAHA. A propeptide spans 196–218 (spacer peptide); it reads AGLPAEHWQLAAARQQRFALDRG. Ser-219 acts as the Nucleophile in catalysis.

Belongs to the peptidase S45 family. In terms of assembly, heterodimer of an alpha subunit and a beta subunit processed from the same precursor.

The protein localises to the periplasm. It carries out the reaction an N-acyl-L-homoserine lactone + H2O = L-homoserine lactone + a carboxylate. Functionally, catalyzes the deacylation of acyl-homoserine lactone (AHL or acyl-HSL), releasing homoserine lactone (HSL) and the corresponding fatty acid. Possesses a specificity for the degradation of long-chain acyl-HSLs (side chains of 11 to 14 carbons in length). The sequence is that of Acyl-homoserine lactone acylase PvdQ (pvdQ) from Pseudomonas fluorescens (strain ATCC BAA-477 / NRRL B-23932 / Pf-5).